Consider the following 193-residue polypeptide: 3-isopropylmalate dehydratase small subunit (193 aa).

This sequence belongs to the LeuD family. LeuD type 1 subfamily. In terms of assembly, heterodimer of LeuC and LeuD.

The catalysed reaction is (2R,3S)-3-isopropylmalate = (2S)-2-isopropylmalate. It participates in amino-acid biosynthesis; L-leucine biosynthesis; L-leucine from 3-methyl-2-oxobutanoate: step 2/4. Catalyzes the isomerization between 2-isopropylmalate and 3-isopropylmalate, via the formation of 2-isopropylmaleate. The polypeptide is 3-isopropylmalate dehydratase small subunit (Bacillus anthracis (strain CDC 684 / NRRL 3495)).